The following is a 347-amino-acid chain: uncharacterized protein (347 aa).

2 coiled-coil regions span residues 148–201 (DQQS…EKDG) and 261–298 (LENL…DTFS). A disordered region spans residues 151–203 (SISNLRKEEKEKQKENENENENENENENENEKENQELDKKVNQTNDNEKDGDE). The span at 155 to 167 (LRKEEKEKQKENE) shows a compositional bias: basic and acidic residues. Residues 168 to 178 (NENENENENEN) are compositionally biased toward acidic residues. Positions 179–191 (ENEKENQELDKKV) are enriched in basic and acidic residues.

This is an uncharacterized protein from Dictyostelium discoideum (Social amoeba).